A 197-amino-acid chain; its full sequence is ATP synthase subunit delta', mitochondrial (197 aa).

The transit peptide at 1 to 19 (MFRRATSTFLSRASATRRF) directs the protein to the mitochondrion.

It belongs to the ATPase epsilon chain family. As to quaternary structure, F-type ATPases have 2 components, CF(1) - the catalytic core - and CF(0) - the membrane proton channel. CF(1) has five subunits: alpha(3), beta(3), gamma(1), delta(1), epsilon(1). CF(0) has three main subunits: a, b and c.

The protein localises to the mitochondrion. The protein resides in the mitochondrion inner membrane. Its function is as follows. Mitochondrial membrane ATP synthase (F(1)F(0) ATP synthase or Complex V) produces ATP from ADP in the presence of a proton gradient across the membrane which is generated by electron transport complexes of the respiratory chain. F-type ATPases consist of two structural domains, F(1) - containing the extramembraneous catalytic core, and F(0) - containing the membrane proton channel, linked together by a central stalk and a peripheral stalk. During catalysis, ATP turnover in the catalytic domain of F(1) is coupled via a rotary mechanism of the central stalk subunits to proton translocation. Part of the complex F(1) domain and of the central stalk which is part of the complex rotary element. Rotation of the central stalk against the surrounding alpha(3)beta(3) subunits leads to hydrolysis of ATP in three separate catalytic sites on the beta subunits. The polypeptide is ATP synthase subunit delta', mitochondrial (Pisum sativum (Garden pea)).